The sequence spans 630 residues: DELLA protein DWARF8 (630 aa).

The tract at residues 1 to 35 is disordered; sequence MKREYQDAGGSGGDMGSSKDKMMAAAAGAGEQEEE. Positions 38–42 match the DELLA motif motif; sequence DELLA. Positions 161 to 222 are disordered; that stretch reads PIPSPVAAPS…AAPPATQASA (62 aa). 2 stretches are compositionally biased toward low complexity: residues 165–176 and 191–222; these read PVAAPSADPSTD and TSSS…QASA. One can recognise a GRAS domain in the interval 234-623; sequence VDTQEAGIRL…RPLIATSAWR (390 aa). The leucine repeat I (LRI) stretch occupies residues 241-297; it reads IRLVHALLACAEAVQQENFSAAEALVKQIPMLASSQGGAMRKVAAYFGEALARRVYR. A LxCxE motif motif is present at residues 248–252; sequence LACAE. A VHIID region spans residues 316–381; it reads HAHFYESCPY…GGPPSFRLTG (66 aa). The short motif at 347–351 is the VHIID element; the sequence is VHVVD. Residues 395-427 form a leucine repeat II (LRII) region; sequence QVGWKLAQFAHTIRVDFQYRGLVAATLADLEPF. Positions 443 to 544 are PFYRE; it reads IAVNSVFELH…EVYLGRQICN (102 aa). The LXXLL motif signature appears at 451–455; the sequence is LHRLL. The tract at residues 547–623 is SAW; sequence ACEGAERTER…RPLIATSAWR (77 aa).

The protein belongs to the GRAS family. DELLA subfamily. Phosphorylated. In terms of processing, ubiquitinated. Upon GA application it is ubiquitinated, leading to its subsequent degradation.

It is found in the nucleus. Functionally, probable transcriptional regulator that acts as a repressor of the gibberellin (GA) signaling pathway. Probably acts by participating in large multiprotein complexes that repress transcription of GA-inducible genes. Upon GA application, it is degraded by the proteasome, allowing the GA signaling pathway. The sequence is that of DELLA protein DWARF8 (D8) from Zea mays (Maize).